Here is a 223-residue protein sequence, read N- to C-terminus: Guanylate kinase (223 aa).

Residues 6–183 (GRLFVMTGAS…AVADFLAILT (178 aa)) form the Guanylate kinase-like domain. 13-20 (GASGVGKG) is an ATP binding site.

The protein belongs to the guanylate kinase family.

The protein resides in the cytoplasm. The catalysed reaction is GMP + ATP = GDP + ADP. In terms of biological role, essential for recycling GMP and indirectly, cGMP. The polypeptide is Guanylate kinase (Thermus thermophilus (strain ATCC 27634 / DSM 579 / HB8)).